Consider the following 110-residue polypeptide: Non-specific lipid-transfer protein 4 (110 aa).

A signal peptide spans 1–17 (CVVLVMCMVVIAPMAEG). 4 disulfide bridges follow: C21–C68, C31–C45, C46–C91, and C66–C105.

The protein belongs to the plant LTP family.

Functionally, plant non-specific lipid-transfer proteins transfer phospholipids as well as galactolipids across membranes. May play a role in wax or cutin deposition in the cell walls of expanding epidermal cells and certain secretory tissues. The protein is Non-specific lipid-transfer protein 4 of Lens culinaris (Lentil).